The sequence spans 396 residues: Ribosomal RNA large subunit methyltransferase I (396 aa).

In terms of domain architecture, PUA spans 2 to 79 (AVRIKLKPGR…REEEIDREFF (78 aa)).

It belongs to the methyltransferase superfamily. RlmI family.

It is found in the cytoplasm. The enzyme catalyses cytidine(1962) in 23S rRNA + S-adenosyl-L-methionine = 5-methylcytidine(1962) in 23S rRNA + S-adenosyl-L-homocysteine + H(+). Specifically methylates the cytosine at position 1962 (m5C1962) of 23S rRNA. In Shewanella sp. (strain MR-7), this protein is Ribosomal RNA large subunit methyltransferase I.